Consider the following 156-residue polypeptide: uncharacterized protein (156 aa).

An N-acetyltransferase domain is found at Val10–Val156.

The protein belongs to the acetyltransferase family.

This is an uncharacterized protein from Mycobacterium bovis (strain ATCC BAA-935 / AF2122/97).